We begin with the raw amino-acid sequence, 280 residues long: Large ribosomal subunit protein uL2 (280 aa).

2 disordered regions span residues 1–59 (MAIR…GGHK) and 223–280 (GVVM…NKKR). Positions 23 to 33 (ELTRSTPEKSL) are enriched in basic and acidic residues. Basic residues-rich tracts occupy residues 36 to 59 (PLHK…GGHK) and 269 to 280 (VRRRRSNKNKKR).

The protein belongs to the universal ribosomal protein uL2 family. As to quaternary structure, part of the 50S ribosomal subunit. Forms a bridge to the 30S subunit in the 70S ribosome.

Its function is as follows. One of the primary rRNA binding proteins. Required for association of the 30S and 50S subunits to form the 70S ribosome, for tRNA binding and peptide bond formation. It has been suggested to have peptidyltransferase activity; this is somewhat controversial. Makes several contacts with the 16S rRNA in the 70S ribosome. This is Large ribosomal subunit protein uL2 from Corynebacterium kroppenstedtii (strain DSM 44385 / JCM 11950 / CIP 105744 / CCUG 35717).